The sequence spans 577 residues: Signal peptide peptidase-like 2B (577 aa).

The N-terminal stretch at 1–19 is a signal peptide; that stretch reads MAAARLAASLLLLAAQVAC. Residues 20–168 are Lumenal-facing; that stretch reads EFGVLRVVPQ…APSEPVMDYN (149 aa). The PA domain maps to 49–149; that stretch reads LPHDLNKVSL…RDLQDIFRRF (101 aa). A glycan (N-linked (GlcNAc...) asparagine) is linked at asparagine 91. The helical transmembrane segment at 169–189 threads the bilayer; the sequence is MVIIFIMAVGTVALGGYWAGS. The Cytoplasmic portion of the chain corresponds to 190 to 216; it reads HDVKKYMKHKRDDVPEKQEDEAVDVTP. The helical transmembrane segment at 217–237 threads the bilayer; it reads VMICVFVVMCCFMLVLLYYFY. The Lumenal portion of the chain corresponds to 238–239; sequence DR. The chain crosses the membrane as a helical span at residues 240 to 260; the sequence is LVYVIIGIFCLASSTGLYSCL. At 261–286 the chain is on the cytoplasmic side; it reads APCVRKLPFCTCRVPDNNLPYFHKRP. A helical membrane pass occupies residues 287–307; it reads QARMLLLALFCVTVSVVWGVF. Residues 308–312 lie on the Lumenal side of the membrane; sequence RNEDQ. A helical membrane pass occupies residues 313 to 333; that stretch reads WAWVLQDTLGIAFCLYMLRTI. Topologically, residues 334-341 are cytoplasmic; the sequence is RLPTFKAC. The chain crosses the membrane as a helical span at residues 342 to 362; the sequence is TLLLLVLFVYDIFFVFITPYL. The active site involves aspartate 352. Residues 363 to 405 are Lumenal-facing; it reads TKSGNSIMVEVATGPSNSSTHEKLPMVLKVPRLNTSPLSLCDR. The chain crosses the membrane as a helical span at residues 406–426; it reads PFSLLGFGDILVPGLLVAYCH. Aspartate 414 is an active-site residue. Topologically, residues 427–438 are cytoplasmic; it reads RFDIQVQSSRIY. The helical transmembrane segment at 439 to 459 threads the bilayer; sequence FVACTIAYGLGLLVTFVALVL. At 460 to 463 the chain is on the lumenal side; the sequence is MRHG. Residues 464–484 traverse the membrane as a helical segment; it reads QPALLYLVPCTLLTSCTVALW. Residues 465 to 467 carry the PAL motif; the sequence is PAL. Residues 485–577 are Cytoplasmic-facing; that stretch reads RREMGAFWTG…IPVVTPGTSA (93 aa). The tract at residues 502 to 577 is disordered; it reads QTPWAAPQGP…IPVVTPGTSA (76 aa).

It belongs to the peptidase A22B family. As to quaternary structure, monomer. Homodimer. Interacts with ITM2B and TNF. In terms of processing, glycosylated.

The protein localises to the cell membrane. It is found in the golgi apparatus membrane. The protein resides in the lysosome membrane. It localises to the endosome membrane. Its subcellular location is the membrane. In terms of biological role, intramembrane-cleaving aspartic protease (I-CLiP) that cleaves type II membrane signal peptides in the hydrophobic plane of the membrane. Functions in ITM2B and TNF processing. Catalyzes the intramembrane cleavage of the anchored fragment of shed TNF-alpha (TNF), which promotes the release of the intracellular domain (ICD) for signaling to the nucleus. May play a role in the regulation of innate and adaptive immunity. The polypeptide is Signal peptide peptidase-like 2B (Rattus norvegicus (Rat)).